Reading from the N-terminus, the 198-residue chain is Synaptobrevin homolog YKT6-A (198 aa).

Residues 8-127 (VLYKGENKVH…IQYNALDSYL (120 aa)) enclose the Longin domain. The v-SNARE coiled-coil homology domain maps to 138–198 (PMSKVQAELD…RKQNSCCDIM (61 aa)). Cysteine 194 carries S-palmitoyl cysteine lipidation. Cysteine 195 carries the post-translational modification Cysteine methyl ester. Residue cysteine 195 is the site of S-farnesyl cysteine attachment. Residues 196-198 (DIM) constitute a propeptide, removed in mature form.

It belongs to the synaptobrevin family. Palmitoylated; catalyzes its own palmitoylation. Palmitoylation is required for Golgi targeting. In terms of processing, farnesylation is required for Golgi targeting.

The protein localises to the cytoplasm. Its subcellular location is the cytosol. The protein resides in the cytoplasmic vesicle membrane. It is found in the golgi apparatus membrane. Its function is as follows. Vesicular soluble NSF attachment protein receptor (v-SNARE) mediating vesicle docking and fusion to a specific acceptor cellular compartment. Functions in endoplasmic reticulum to Golgi transport; as part of a SNARE complex composed of GOSR1, GOSR2 and STX5. Functions in early/recycling endosome to TGN transport; as part of a SNARE complex composed of BET1L, GOSR1 and STX5. Has a S-palmitoyl transferase activity. The sequence is that of Synaptobrevin homolog YKT6-A (ykt6-a) from Xenopus laevis (African clawed frog).